A 551-amino-acid polypeptide reads, in one-letter code: Terpene synthase 10 (551 aa).

Residues D303, D307, and E455 each contribute to the Mg(2+) site. Positions D303–D307 match the DDXXD motif motif.

This sequence belongs to the terpene synthase family. It depends on Mg(2+) as a cofactor.

In terms of biological role, catalyzes the cyclization of farnesyl diphosphate to sesquiterpene olefins. The polypeptide is Terpene synthase 10 (TPS10) (Ricinus communis (Castor bean)).